The sequence spans 610 residues: Probable eukaryotic translation initiation factor 4 gamma homolog (610 aa).

Residues 59-118 (PIRKEDLLDSTDSEILSESSVESETEVENIPQEADTGNTREESEECQREAGAEEEPRPAL) form a disordered region. Over residues 96–118 (NTREESEECQREAGAEEEPRPAL) the composition is skewed to basic and acidic residues. An MIF4G domain is found at 175–414 (YRPDNNRKDT…LLDKRSSWKP (240 aa)).

The protein belongs to the eukaryotic initiation factor 4G family. Component of the eIF4F complex, which composition varies with external and internal environmental conditions.

The protein resides in the cytoplasm. Component of the protein complex eIF4F, which is involved in the recognition of the mRNA cap, ATP-dependent unwinding of 5'-terminal secondary structure and recruitment of mRNA to the ribosome. This chain is Probable eukaryotic translation initiation factor 4 gamma homolog (EIF4G), found in Encephalitozoon cuniculi (strain GB-M1) (Microsporidian parasite).